A 778-amino-acid chain; its full sequence is MSSDWDEIKRLAADFQKAQLTSTLQKLSERNCIEIVTLLLEKQLLDVVFTNDGKEYITPDHLEREIQDELYANGGRANLVEVSKTLNVDLSRIVTLAERIAAENPHIHLLLGQLIDEDYITHIAQEINEKLAQHGEISISDLTSQFDLPSDFLQQNVVEKHLGKIIKGRQDASNPRVFFTQAYIQRCKAKIRGALAAITKPTNVAVILQQINVQEKIFHSLLDEISPAGQVTSKQANAQYVPHIYAKTQADWVNSFYKQNSFLEYEAINKLGISDAKTYIRNQFPNEQFLFLKRVALGARLIELTVVSALNECSATKHYLDLSTILPSNLSEEDIAEAFDAVIAQKHCNPSHFVYLESIVFSQAYLTELVQPCHDMALALAKSAIDNGVYQQYIVEKTLAQKGNNLSTSHDADDDSKTDKRDERRRKAASGKAGGGAQGRETKTKSTKKHQRGRAAAHNHDSEDEEDTVQQSAGNTRKSVKALELVKSSDIINLIKITLEEEGLEHLAKPIAALYLNQLNQVALSKAQELYEATPQTNRRQTHAAIQERVNMLLVDIRLYEKGLKLFHADTQTQLVKYLLKSLGNEICNELTLYVAAECSLSVKSTNLNVDQRIKLIQELDAQYRNALLEQNKALNRSIEDFELATESVLKACSMIIKKADKKKDRALIIGHKEKLLQQLLECHEPALLLHLAALILFTTITGCILHASGKFVSAILQHIRASLNEPQNALYLVLQMLQQATPDSAESKSINEQLQSLQAEVVDLAQNYSRASVSKAD.

Residues 404–477 (NNLSTSHDAD…TVQQSAGNTR (74 aa)) form a disordered region. The segment covering 445–457 (KSTKKHQRGRAAA) has biased composition (basic residues).

It belongs to the UFL1 family.

In terms of biological role, E3 UFM1-protein ligase that mediates ufmylation of target proteins. The polypeptide is E3 UFM1-protein ligase 1 homolog (Drosophila virilis (Fruit fly)).